The following is a 556-amino-acid chain: Formate--tetrahydrofolate ligase (556 aa).

65–72 (TPAGEGKT) lines the ATP pocket.

It belongs to the formate--tetrahydrofolate ligase family.

The enzyme catalyses (6S)-5,6,7,8-tetrahydrofolate + formate + ATP = (6R)-10-formyltetrahydrofolate + ADP + phosphate. The protein operates within one-carbon metabolism; tetrahydrofolate interconversion. This is Formate--tetrahydrofolate ligase from Ruminiclostridium cellulolyticum (strain ATCC 35319 / DSM 5812 / JCM 6584 / H10) (Clostridium cellulolyticum).